The following is a 351-amino-acid chain: NAD-dependent protein deacetylase SIR2rp1 (351 aa).

The Deacetylase sirtuin-type domain occupies 10–325 (HVVGEPTFEG…RSFAQALGFG (316 aa)). Residues 37-57 (GAGI…TGLY) and 122-125 (QNID) contribute to the NAD(+) site. The active-site Proton acceptor is His-142. Residues Cys-150, Cys-153, Cys-174, and Cys-177 each contribute to the Zn(2+) site. Residues 213–215 (GTS) and 238–240 (NLE) each bind NAD(+). A disordered region spans residues 260–284 (SSYRLSTGNGNGSKISSGDSSNSSS). Residues 265–284 (STGNGNGSKISSGDSSNSSS) are compositionally biased toward low complexity. Position 311 (Cys-311) interacts with NAD(+).

The protein belongs to the sirtuin family. Class I subfamily. Zn(2+) is required as a cofactor.

Its subcellular location is the nucleus. The protein localises to the chromosome. It is found in the telomere. The catalysed reaction is N(6)-acetyl-L-lysyl-[protein] + NAD(+) + H2O = 2''-O-acetyl-ADP-D-ribose + nicotinamide + L-lysyl-[protein]. Functionally, NAD-dependent protein deacetylase, which is involved in repression of RNA polymerase I-mediated expression immediately adjacent to telomeres. It is however not involved in antigenic variation and subtelomeric variant surface glycoprotein (VSG) gene silencing. Plays a role in DNA damage response. Also has ADP-ribosylation activity in vitro. This Trypanosoma brucei brucei (strain 927/4 GUTat10.1) protein is NAD-dependent protein deacetylase SIR2rp1 (SIR2rp1).